Here is a 679-residue protein sequence, read N- to C-terminus: MKHRGQEEMGVESTATSDEVVKVPANGNKLEGKNHKQKKLLPTNTPGDVSRVWKIEDSEALYRIEGWGQPYFSINAAGHVTVSPKGDRGGSLDLFELVNALKQRSLGLPLLIRFSDILEDRIERLNACFAKAIARYNYPGVYRGVFPVKCNQQRHLIEDLVRFGRPHQFGLEAGSKPELMIALALLDTPGSLLICNGYKDREYVETAMLSQRLGQTPIIVLEQVEEVDLVIAASHQLGIKPILGVRAKLSTQGMGRWGTSTGDRAKFGLTIPEIIQAVDKLRDADLLDSLQLMHFHIGSQISAINVIKDAIQEASRIYVELASLGANMKYLDVGGGLGVDYDGSQTNFYASKNYNMQNYANDIVAELKDTCAEKQIPVPTLISESGRAIASHQSVLIFDVLSTSDVPRDNPEPPKEGESPVINYLWETYQSINKENYQEFYHDATQFKEEAISRFNLGILRLRERAKAERLYWACCQKILDIIRQHDYVPDELEDLEKIMASIYYINLSVFQSAPDCWAIDQLFPIMPIHRLDEEPTQRGILADLTCDSDGKIDRFIDLRDVKSVLELHPFQPGEPYYMGMFLNGAYQEIMGNLHNLFGDTNAVHIQLTPKGYQIEHVVKGDTMSEVVSYVQYDSEDMVENIRQRCERALEEKRITLAESQRLLQTYEQSLRRYTYLNS.

The segment at Met-1–Thr-43 is disordered. Lys-149 is modified (N6-(pyridoxal phosphate)lysine). Leu-331–Tyr-341 serves as a coordination point for substrate.

The protein belongs to the Orn/Lys/Arg decarboxylase class-II family. SpeA subfamily. It depends on Mg(2+) as a cofactor. Requires pyridoxal 5'-phosphate as cofactor.

It carries out the reaction L-arginine + H(+) = agmatine + CO2. Catalyzes the biosynthesis of agmatine from arginine. This is Biosynthetic arginine decarboxylase from Nostoc sp. (strain PCC 7120 / SAG 25.82 / UTEX 2576).